Here is a 389-residue protein sequence, read N- to C-terminus: Lipid-A-disaccharide synthase (389 aa).

The protein belongs to the LpxB family.

The catalysed reaction is a lipid X + a UDP-2-N,3-O-bis[(3R)-3-hydroxyacyl]-alpha-D-glucosamine = a lipid A disaccharide + UDP + H(+). Its pathway is bacterial outer membrane biogenesis; LPS lipid A biosynthesis. Functionally, condensation of UDP-2,3-diacylglucosamine and 2,3-diacylglucosamine-1-phosphate to form lipid A disaccharide, a precursor of lipid A, a phosphorylated glycolipid that anchors the lipopolysaccharide to the outer membrane of the cell. The sequence is that of Lipid-A-disaccharide synthase from Paraburkholderia phymatum (strain DSM 17167 / CIP 108236 / LMG 21445 / STM815) (Burkholderia phymatum).